A 441-amino-acid polypeptide reads, in one-letter code: Homogentisate 1,2-dioxygenase (441 aa).

The active-site Proton acceptor is His-287. Positions 330 and 336 each coordinate Fe cation. Residues Tyr-345 and His-366 each coordinate homogentisate. His-366 lines the Fe cation pocket.

This sequence belongs to the homogentisate dioxygenase family. In terms of assembly, hexamer; dimer of trimers. The cofactor is Fe cation.

The catalysed reaction is homogentisate + O2 = 4-maleylacetoacetate + H(+). It participates in amino-acid degradation; L-phenylalanine degradation; acetoacetate and fumarate from L-phenylalanine: step 4/6. Its function is as follows. Involved in the catabolism of homogentisate (2,5-dihydroxyphenylacetate or 2,5-OH-PhAc), a central intermediate in the degradation of phenylalanine and tyrosine. Catalyzes the oxidative ring cleavage of the aromatic ring of homogentisate to yield maleylacetoacetate. This is Homogentisate 1,2-dioxygenase from Xanthomonas oryzae pv. oryzae (strain MAFF 311018).